A 356-amino-acid chain; its full sequence is Protein RecA (356 aa).

67 to 74 lines the ATP pocket; it reads GPESSGKT.

The protein belongs to the RecA family.

The protein localises to the cytoplasm. Functionally, can catalyze the hydrolysis of ATP in the presence of single-stranded DNA, the ATP-dependent uptake of single-stranded DNA by duplex DNA, and the ATP-dependent hybridization of homologous single-stranded DNAs. It interacts with LexA causing its activation and leading to its autocatalytic cleavage. The chain is Protein RecA from Yersinia pestis bv. Antiqua (strain Angola).